Consider the following 319-residue polypeptide: Taste receptor type 2 member 30 (319 aa).

M1 is a topological domain (extracellular). Residues 2 to 22 (ITFLPIIFSILIVVIFVIGNF) form a helical membrane-spanning segment. At 23 to 46 (ANGFIALVNSIEWVKRQKISFVDQ) the chain is on the cytoplasmic side. Residues 47-67 (ILTALAVSRVGLLWVLLLHWY) form a helical membrane-spanning segment. Residues 68–86 (ATQLNPAFYSVEVRITAYN) are Extracellular-facing. Residues 87–107 (VWAVTNHFSSWLATSLSMFYL) traverse the membrane as a helical segment. The Cytoplasmic segment spans residues 108–126 (LRIANFSNLIFLRIKRRVK). A helical transmembrane segment spans residues 127 to 147 (SVVLVILLGPLLFLVCHLFVI). Residues 148-178 (NMDETVWTKEYEGNVTWKIKLRSAMYHSNMT) lie on the Extracellular side of the membrane. N-linked (GlcNAc...) asparagine glycosylation is found at N161 and N176. A helical transmembrane segment spans residues 179–199 (LTMLANFVPLTLTLISFLLLI). Topologically, residues 200–229 (CSLCKHLKKMQLHGKGSQDPSTKVHIKALQ) are cytoplasmic. The chain crosses the membrane as a helical span at residues 230-250 (TVTSFLLLCAIYFLSMIISVC). Residues 251–259 (NFGRLEKQP) are Extracellular-facing. The chain crosses the membrane as a helical span at residues 260 to 280 (VFMFCQAIIFSYPSTHPFILI). At 281–319 (LGNKKLKQIFLSVLRHVRYWVKDRSLRLHRFTRGALCVF) the chain is on the cytoplasmic side.

The protein belongs to the G-protein coupled receptor T2R family. In terms of tissue distribution, expressed in subsets of taste receptor cells of the tongue and exclusively in gustducin-positive cells.

The protein localises to the membrane. Functionally, receptor that may play a role in the perception of bitterness and is gustducin-linked. May play a role in sensing the chemical composition of the gastrointestinal content. The activity of this receptor may stimulate alpha gustducin, mediate PLC-beta-2 activation and lead to the gating of TRPM5. The chain is Taste receptor type 2 member 30 (TAS2R30) from Homo sapiens (Human).